A 428-amino-acid chain; its full sequence is Tyrosine--tRNA ligase (428 aa).

Residue tyrosine 41 participates in L-tyrosine binding. The 'HIGH' region signature appears at 46 to 55 (PTADSLHLGH). Residues tyrosine 179 and glutamine 183 each contribute to the L-tyrosine site. Residues 239 to 243 (KFGKT) carry the 'KMSKS' region motif. Lysine 242 serves as a coordination point for ATP. The 58-residue stretch at 361–418 (TDLMQALVDAELQPSRGQARKTIASNAVTINGEKQSDPEYIFNDEDRLFGRYTLLRRG) folds into the S4 RNA-binding domain.

It belongs to the class-I aminoacyl-tRNA synthetase family. TyrS type 1 subfamily. As to quaternary structure, homodimer.

The protein resides in the cytoplasm. The enzyme catalyses tRNA(Tyr) + L-tyrosine + ATP = L-tyrosyl-tRNA(Tyr) + AMP + diphosphate + H(+). Its function is as follows. Catalyzes the attachment of tyrosine to tRNA(Tyr) in a two-step reaction: tyrosine is first activated by ATP to form Tyr-AMP and then transferred to the acceptor end of tRNA(Tyr). In Salmonella arizonae (strain ATCC BAA-731 / CDC346-86 / RSK2980), this protein is Tyrosine--tRNA ligase.